Reading from the N-terminus, the 96-residue chain is MRDPRDIIKRPVITERSMEMMAEKKYTFDVDVKANKTEVKDAVEAIFGVEVEKVNIMNYKPKAKRVGRHAGFTNRRRKAIVKLTADSKEIEIFQGV.

Belongs to the universal ribosomal protein uL23 family. As to quaternary structure, part of the 50S ribosomal subunit. Contacts protein L29, and trigger factor when it is bound to the ribosome.

Functionally, one of the early assembly proteins it binds 23S rRNA. One of the proteins that surrounds the polypeptide exit tunnel on the outside of the ribosome. Forms the main docking site for trigger factor binding to the ribosome. This Bacillus cytotoxicus (strain DSM 22905 / CIP 110041 / 391-98 / NVH 391-98) protein is Large ribosomal subunit protein uL23.